The chain runs to 570 residues: Cation/calcium exchanger 1 (570 aa).

A run of 13 helical transmembrane segments spans residues 14 to 34, 97 to 117, 141 to 161, 176 to 196, 212 to 232, 235 to 255, 344 to 364, 371 to 391, 401 to 421, 427 to 447, 479 to 499, 513 to 533, and 546 to 566; these read LSLLINIFFIFLIFLHFASQT, SPVLGHLVLSAWLFVLFYLLG, MAGVTLLSLGNGAPDLFSSVV, ILGGAFFVSSFVVGTICVLIG, VFLLVALCCLGLIIFIGKVTI, ALCYLSIYLLYVGFLSVSHFF, CAVVSTAIAPVLLTELYCSHY, LILYIISGSIGLIVGILAYLT, FSLVWLLGGFTMSVTWTYMIA, LLISLGNIFGISPSVLGLTVL, YAGPLFNTVIGLGVPLVISSL, SLLETLGFLMVGLLWALVIMP, and GLLAIYLCFLSLRLARVFGVL.

It belongs to the Ca(2+):cation antiporter (CaCA) (TC 2.A.19) family. Cation/calcium exchanger (CCX) subfamily. As to expression, expressed in roots, leaves, stems and flowers.

Its subcellular location is the vacuole membrane. In terms of biological role, vacuolar membrane-localized H(+)-dependent K(+) and Na(+) transporter. The chain is Cation/calcium exchanger 1 (CCX1) from Arabidopsis thaliana (Mouse-ear cress).